Reading from the N-terminus, the 185-residue chain is Lipid A acyltransferase PagP (185 aa).

The signal sequence occupies residues 1–24 (MKTHNDILAALAALPLFLTGAAFA). Catalysis depends on residues His-57, Asp-100, and Ser-101.

Belongs to the lipid A palmitoyltransferase family. As to quaternary structure, homodimer.

It localises to the cell outer membrane. It carries out the reaction a lipid A + a 1,2-diacyl-sn-glycero-3-phosphocholine = a hepta-acyl lipid A + a 2-acyl-sn-glycero-3-phosphocholine. The catalysed reaction is a lipid IVA + a 1,2-diacyl-sn-glycero-3-phosphocholine = a lipid IVB + a 2-acyl-sn-glycero-3-phosphocholine. The enzyme catalyses a lipid IIA + a 1,2-diacyl-sn-glycero-3-phosphocholine = a lipid IIB + a 2-acyl-sn-glycero-3-phosphocholine. Functionally, transfers a fatty acid residue from the sn-1 position of a phospholipid to the N-linked hydroxyfatty acid chain on the proximal unit of lipid A or its precursors. In Edwardsiella tarda (strain FL6-60), this protein is Lipid A acyltransferase PagP.